Reading from the N-terminus, the 228-residue chain is Prolactin-2A1 (228 aa).

A signal peptide spans 1 to 28 (MQLSVTHPCCRTLILLLVSNLLLWESEA). Disulfide bonds link Cys-87/Cys-203 and Cys-220/Cys-228.

It belongs to the somatotropin/prolactin family. In terms of tissue distribution, expressed specifically in the placenta. Expression restricted to the junctional zone of the chorioallantoic placenta.

It is found in the secreted. The sequence is that of Prolactin-2A1 (Prl2a1) from Mus musculus (Mouse).